Consider the following 142-residue polypeptide: Large ribosomal subunit protein uL11 (142 aa).

Belongs to the universal ribosomal protein uL11 family. In terms of assembly, part of the ribosomal stalk of the 50S ribosomal subunit. Interacts with L10 and the large rRNA to form the base of the stalk. L10 forms an elongated spine to which L12 dimers bind in a sequential fashion forming a multimeric L10(L12)X complex. In terms of processing, one or more lysine residues are methylated.

Forms part of the ribosomal stalk which helps the ribosome interact with GTP-bound translation factors. This is Large ribosomal subunit protein uL11 from Desulfitobacterium hafniense (strain DSM 10664 / DCB-2).